The primary structure comprises 953 residues: Scaffold attachment factor B2 (953 aa).

Residues 1 to 29 (MAETLPGSGDSGPGTASLGPGVAETGTRR) are disordered. Alanine 2 is modified (N-acetylalanine). The region spanning 30-64 (LSELRVIDLRAELKKRNLDTGGNKSVLMERLKKAV) is the SAP domain. Serine 54 carries the post-translational modification Phosphoserine. Residue lysine 65 forms a Glycyl lysine isopeptide (Lys-Gly) (interchain with G-Cter in SUMO1); alternate linkage. Lysine 65 is covalently cross-linked (Glycyl lysine isopeptide (Lys-Gly) (interchain with G-Cter in SUMO2); alternate). A disordered region spans residues 91 to 114 (KGLKMEEEGTEDNGLEDDSRDGQE). A Glycyl lysine isopeptide (Lys-Gly) (interchain with G-Cter in SUMO2) cross-link involves residue lysine 94. The segment covering 98–114 (EGTEDNGLEDDSRDGQE) has biased composition (acidic residues). A phosphoserine mark is found at serine 109 and serine 158. Residues lysine 188 and lysine 199 each participate in a glycyl lysine isopeptide (Lys-Gly) (interchain with G-Cter in SUMO2) cross-link. Threonine 201 carries the phosphothreonine modification. Serine 207 carries the phosphoserine modification. Residues 219–404 (ILGETCKSEP…KDEKGRVGSG (186 aa)) form a disordered region. Residues 224-233 (CKSEPVKEES) show a composition bias toward basic and acidic residues. Residue lysine 230 forms a Glycyl lysine isopeptide (Lys-Gly) (interchain with G-Cter in SUMO) linkage. Over residues 274–285 (SESTAHAQSSKA) the composition is skewed to polar residues. The segment covering 292 to 308 (VKREPAEQPGDGERTDC) has biased composition (basic and acidic residues). Lysine 293 participates in a covalent cross-link: Glycyl lysine isopeptide (Lys-Gly) (interchain with G-Cter in SUMO). The span at 318 to 329 (EQSSAASELAEA) shows a compositional bias: low complexity. Over residues 345–358 (EARDSKEDGRKFDF) the composition is skewed to basic and acidic residues. Over residues 370–382 (ESSTSEGADQKMS) the composition is skewed to polar residues. Glycyl lysine isopeptide (Lys-Gly) (interchain with G-Cter in SUMO2) cross-links involve residues lysine 380, lysine 385, lysine 388, lysine 391, and lysine 395. The segment covering 383 to 400 (SFKEEKDIKPIIKDEKGR) has biased composition (basic and acidic residues). The RRM domain maps to 407–485 (RNLWVSGLSS…RMISVEKAKN (79 aa)). 2 positions are modified to phosphoserine: serine 507 and serine 513. Glycyl lysine isopeptide (Lys-Gly) (interchain with G-Cter in SUMO2) cross-links involve residues lysine 517, lysine 524, lysine 525, lysine 541, lysine 542, and lysine 551. Residues 525–551 (KEEKIEKKEEKKPEDIKKEEKDQDELK) are compositionally biased toward basic and acidic residues. Disordered stretches follow at residues 525 to 665 (KEEK…RLQR) and 684 to 953 (RERL…TRRY). Residues 555–564 (TNRSRVTKSG) are compositionally biased toward polar residues. Positions 567–579 (GMERTVVMDKSKG) are enriched in basic and acidic residues. Residues lysine 578, lysine 586, and lysine 608 each participate in a glycyl lysine isopeptide (Lys-Gly) (interchain with G-Cter in SUMO2) cross-link. 2 stretches are compositionally biased toward basic and acidic residues: residues 590–665 (RSKE…RLQR) and 684–820 (RERL…DSRD). An interaction with SAFB1 region spans residues 600 to 953 (DRKSESKEKR…PPYPHFTRRY (354 aa)). A Glycyl lysine isopeptide (Lys-Gly) (interchain with G-Cter in SUMO2); alternate cross-link involves residue lysine 616. At lysine 616 the chain carries N6-acetyllysine; alternate. Residues 713 to 730 (RRQQEQLRYEQERRPGRR) carry the Nuclear localization signal motif. Serine 787 and serine 832 each carry phosphoserine. Over residues 843–859 (GGRDWGEHNQRLEEHQA) the composition is skewed to basic and acidic residues. Positions 881–890 (GERGLSGPSG) are enriched in gly residues. The residue at position 886 (serine 886) is a Phosphoserine. 2 positions are modified to omega-N-methylarginine: arginine 897 and arginine 903. Over residues 899-927 (GVAGRGGFAQGGHSQGHVVPGGGLEGGGV) the composition is skewed to gly residues.

As to quaternary structure, interacts with SAFB/SAFB1 and SCAM1. Interacts with isoform 2 SRPK1 and inhibits its activity. In terms of tissue distribution, expressed at high levels in the CNS and at low levels in the liver. Expressed in a wide number of breast cancer cell lines.

It localises to the cytoplasm. Its subcellular location is the nucleus. Binds to scaffold/matrix attachment region (S/MAR) DNA. Can function as an estrogen receptor corepressor and can also inhibit cell proliferation. In Homo sapiens (Human), this protein is Scaffold attachment factor B2 (SAFB2).